A 567-amino-acid polypeptide reads, in one-letter code: Formate--tetrahydrofolate ligase (567 aa).

68 to 75 (TPLGEGKT) contacts ATP.

It belongs to the formate--tetrahydrofolate ligase family.

The catalysed reaction is (6S)-5,6,7,8-tetrahydrofolate + formate + ATP = (6R)-10-formyltetrahydrofolate + ADP + phosphate. It participates in one-carbon metabolism; tetrahydrofolate interconversion. In Desulforamulus reducens (strain ATCC BAA-1160 / DSM 100696 / MI-1) (Desulfotomaculum reducens), this protein is Formate--tetrahydrofolate ligase.